The chain runs to 438 residues: uncharacterized protein (438 aa).

A run of 12 helical transmembrane segments spans residues 22 to 42, 59 to 79, 89 to 109, 137 to 157, 174 to 194, 237 to 257, 258 to 278, 292 to 312, 330 to 350, 356 to 376, 380 to 400, and 418 to 438; these read VSPI…GGFG, SAAL…AGLF, IVKG…MLIA, MVMA…TPWG, FFVP…FLAF, LIYL…LGTK, HPSV…YPNV, AITV…LSGT, MGGF…FVLS, FGMV…PVEI, SIMG…VLLV, and AVIT…ITIL.

Belongs to the CitM (TC 2.A.11) transporter family.

It localises to the cell membrane. In terms of biological role, transports the free citrate anion. This is an uncharacterized protein from Bacillus subtilis (strain 168).